The chain runs to 312 residues: Apulose-4-phosphate transketolase subunit B (312 aa).

This sequence belongs to the transketolase family. In terms of assembly, probable heterodimer composed of AptA and AptB. Thiamine diphosphate serves as cofactor.

It catalyses the reaction apulose 4-phosphate + D-glyceraldehyde 3-phosphate = D-xylulose 5-phosphate + dihydroxyacetone phosphate. Its pathway is carbohydrate metabolism. Its function is as follows. Involved in catabolism of D-apiose. Catalyzes the transfer of the glycolaldehyde group from apulose-4-phosphate to D-glyceraldehyde 3-phosphate, generating dihydroxyacetone phosphate and D-xylulose-5-phosphate. The polypeptide is Apulose-4-phosphate transketolase subunit B (Phocaeicola vulgatus (strain ATCC 8482 / DSM 1447 / JCM 5826 / CCUG 4940 / NBRC 14291 / NCTC 11154) (Bacteroides vulgatus)).